Consider the following 751-residue polypeptide: E3 ubiquitin-protein ligase SMURF2 (751 aa).

The 119-residue stretch at 1-119 folds into the C2 domain; it reads MSNQGSRRNG…TGYQRLDLCK (119 aa). The WW 1 domain occupies 157–190; that stretch reads NDLPDGWEERRTASGRIQYLNHITRTTQWERPTR. Polar residues predominate over residues 214–226; that stretch reads GTNGASCGQTSDP. Residues 214–236 form a disordered region; it reads GTNGASCGQTSDPRISERRVRSQ. 2 consecutive WW domains span residues 251-284 and 297-330; these read PDLPEGYEQRTTQQGQVYFLHTQTGVSTWHDPRV and GPLPPGWEIRNTATGRVYFVDHNNRTTQFTDPRL. Residues 417-751 enclose the HECT domain; that stretch reads RPKDLWKRLM…IEETCGFAVE (335 aa). Cysteine 719 serves as the catalytic Glycyl thioester intermediate.

Its subcellular location is the nucleus. It is found in the cytoplasm. The protein resides in the cell membrane. The protein localises to the membrane raft. It carries out the reaction S-ubiquitinyl-[E2 ubiquitin-conjugating enzyme]-L-cysteine + [acceptor protein]-L-lysine = [E2 ubiquitin-conjugating enzyme]-L-cysteine + N(6)-ubiquitinyl-[acceptor protein]-L-lysine.. Its pathway is protein modification; protein ubiquitination. In terms of biological role, E3 ubiquitin-protein ligase which accepts ubiquitin from an E2 ubiquitin-conjugating enzyme in the form of a thioester and then directly transfers the ubiquitin to targeted substrates. The protein is E3 ubiquitin-protein ligase SMURF2 (smurf2) of Xenopus laevis (African clawed frog).